We begin with the raw amino-acid sequence, 234 residues long: Ubiquitin domain-containing protein 2 (234 aa).

A disordered region spans residues 1–46; sequence MGGCVGAQHDSSGSLNENSEGTGVALGRNQPLKKEKPKWKSDYPMT. The segment covering 9 to 21 has biased composition (polar residues); sequence HDSSGSLNENSEG. A compositionally biased stretch (basic and acidic residues) spans 32 to 41; that stretch reads LKKEKPKWKS. The 76-residue stretch at 152-227 folds into the Ubiquitin-like domain; it reads SQLRLRLSTG…VQVIMSQPLQ (76 aa).

The protein resides in the cytoplasm. The chain is Ubiquitin domain-containing protein 2 (UBTD2) from Bos taurus (Bovine).